The sequence spans 24 residues: M-ectatotoxin-Eb2b (24 aa).

In terms of tissue distribution, expressed by the venom gland.

The protein resides in the secreted. Its function is as follows. Antimicrobial peptide active against Gram-negative bacterium E.coli MH1 (MIC=2.5 uM) and P.aeruginosa PAO1 (MIC=10 uM) and against Gram-positive bacterium A.globiformis VKM Ac-1112 (MIC=0.6 uM). The protein is M-ectatotoxin-Eb2b of Ectatomma brunneum (Ant).